The following is a 519-amino-acid chain: Putative cytochrome P450 CYP13A1 (519 aa).

Cys465 is a binding site for heme.

Belongs to the cytochrome P450 family. The cofactor is heme.

Its function is as follows. Cytochromes P450 are a group of heme-thiolate monooxygenases. They oxidize a variety of structurally unrelated compounds, including steroids, fatty acids, and xenobiotics. This Caenorhabditis elegans protein is Putative cytochrome P450 CYP13A1 (cyp-13A1).